Reading from the N-terminus, the 216-residue chain is MEFRLVDLKTWKRKEYFTHYFESVPCTYSMTVKLDITTIKTGKAKLYPALLYAVSTVVNRHEEFRMTVDDEGQIGIFSEMMPCYTIFQKDTEMFSNIWTEYIGDYTEFCKQYEKDMQQYGENKGMMAKPNPPVNTFPVSMIPWTTFEGFNLNLQKGYGYLLPIFTFGRYYEENGKYWIPLSIQVHHAVCDGFHTCRFINELQDVIQSLQNHGGDEE.

His-186 (proton acceptor) is an active-site residue.

It belongs to the chloramphenicol acetyltransferase family. As to quaternary structure, homotrimer.

The enzyme catalyses chloramphenicol + acetyl-CoA = chloramphenicol 3-acetate + CoA. In terms of biological role, this enzyme is an effector of chloramphenicol resistance in bacteria. This is Chloramphenicol acetyltransferase (cat) from Vibrio anguillarum (Listonella anguillarum).